A 392-amino-acid polypeptide reads, in one-letter code: Proteasomal ATPase-associated factor 1 (392 aa).

Ala-2 carries the N-acetylalanine modification. WD repeat units lie at residues 82–121, 125–163, 167–205, 209–259, 270–308, 313–349, and 353–389; these read APYT…IWQA, ELRR…IWSA, SCVV…LWDC, ACLG…LARE, SRQL…QLDV, APVQ…IVQQ, and YVTE…RYQL.

Belongs to the WD repeat PAAF1/RPN14 family. In terms of assembly, interacts with PSMC1, PSMC2, PSMC3, PSMC4, PSMC5 and PSMC6. Interacts with SUPT6H. As to quaternary structure, (Microbial infection) Interacts with HIV-1 Tat. As to expression, ubiquitously expressed, with highest levels in kidney, brain and testis.

Functionally, inhibits proteasome 26S assembly and proteolytic activity by impairing the association of the 19S regulatory complex with the 20S core. In case of HIV-1 infection, recruited by viral Tat to the HIV-1 promoter, where it promotes the recruitment of 19S regulatory complex through dissociation of the proteasome 26S. This presumably promotes provirus transcription efficiency. Protects SUPT6H from proteasomal degradation. The sequence is that of Proteasomal ATPase-associated factor 1 (PAAF1) from Homo sapiens (Human).